A 70-amino-acid polypeptide reads, in one-letter code: Small integral membrane protein 42 (70 aa).

The chain crosses the membrane as a helical span at residues 26–46 (LVNVLFFFTPLMTLVTLLILV).

The protein resides in the membrane. The sequence is that of Small integral membrane protein 42 from Homo sapiens (Human).